Consider the following 201-residue polypeptide: Recombination protein RecR (201 aa).

A C4-type zinc finger spans residues 60-75 (CSCCGNVDTSDPCTIC). A Toprim domain is found at 83–178 (TTLIVVEDVS…RVTRLAHGVP (96 aa)).

It belongs to the RecR family.

May play a role in DNA repair. It seems to be involved in an RecBC-independent recombinational process of DNA repair. It may act with RecF and RecO. The polypeptide is Recombination protein RecR (Brucella anthropi (strain ATCC 49188 / DSM 6882 / CCUG 24695 / JCM 21032 / LMG 3331 / NBRC 15819 / NCTC 12168 / Alc 37) (Ochrobactrum anthropi)).